A 542-amino-acid chain; its full sequence is Glucose-6-phosphate isomerase 2 (542 aa).

E353 (proton donor) is an active-site residue. Residues H384 and K505 contribute to the active site.

This sequence belongs to the GPI family.

It is found in the cytoplasm. It carries out the reaction alpha-D-glucose 6-phosphate = beta-D-fructose 6-phosphate. The protein operates within carbohydrate biosynthesis; gluconeogenesis. It functions in the pathway carbohydrate degradation; glycolysis; D-glyceraldehyde 3-phosphate and glycerone phosphate from D-glucose: step 2/4. In terms of biological role, catalyzes the reversible isomerization of glucose-6-phosphate to fructose-6-phosphate. The polypeptide is Glucose-6-phosphate isomerase 2 (Cupriavidus pinatubonensis (strain JMP 134 / LMG 1197) (Cupriavidus necator (strain JMP 134))).